We begin with the raw amino-acid sequence, 253 residues long: Triosephosphate isomerase (253 aa).

8-10 (NWK) is a substrate binding site. Residue histidine 93 is the Electrophile of the active site. Glutamate 165 serves as the catalytic Proton acceptor. Residues glycine 171, serine 210, and 231–232 (GG) each bind substrate.

This sequence belongs to the triosephosphate isomerase family. As to quaternary structure, homodimer.

It localises to the cytoplasm. The enzyme catalyses D-glyceraldehyde 3-phosphate = dihydroxyacetone phosphate. It functions in the pathway carbohydrate biosynthesis; gluconeogenesis. It participates in carbohydrate degradation; glycolysis; D-glyceraldehyde 3-phosphate from glycerone phosphate: step 1/1. Functionally, involved in the gluconeogenesis. Catalyzes stereospecifically the conversion of dihydroxyacetone phosphate (DHAP) to D-glyceraldehyde-3-phosphate (G3P). The polypeptide is Triosephosphate isomerase (Francisella tularensis subsp. novicida (strain U112)).